The primary structure comprises 66 residues: Large ribosomal subunit protein bL31 (66 aa).

Residues cysteine 16, cysteine 18, cysteine 36, and cysteine 39 each coordinate Zn(2+).

It belongs to the bacterial ribosomal protein bL31 family. Type A subfamily. In terms of assembly, part of the 50S ribosomal subunit. Zn(2+) is required as a cofactor.

Functionally, binds the 23S rRNA. The sequence is that of Large ribosomal subunit protein bL31 from Desulforamulus reducens (strain ATCC BAA-1160 / DSM 100696 / MI-1) (Desulfotomaculum reducens).